We begin with the raw amino-acid sequence, 436 residues long: GTPase Der (436 aa).

EngA-type G domains are found at residues 4–167 (PIVA…GEEE) and 176–351 (IRLS…ENHK). Residues 10–17 (GRPNVGKS), 57–61 (DTGGI), 119–122 (NKVD), 182–189 (GRPNVGKS), 229–233 (DTAGM), and 294–297 (NKWD) contribute to the GTP site. The region spanning 352–436 (KRVQSSTLNE…PIHIIARKRN (85 aa)) is the KH-like domain.

This sequence belongs to the TRAFAC class TrmE-Era-EngA-EngB-Septin-like GTPase superfamily. EngA (Der) GTPase family. In terms of assembly, associates with the 50S ribosomal subunit.

In terms of biological role, GTPase that plays an essential role in the late steps of ribosome biogenesis. The polypeptide is GTPase Der (Staphylococcus aureus (strain Mu3 / ATCC 700698)).